The sequence spans 367 residues: MTSERIRVAILFGGRSAEHDVSRASAANIFRSLDAGRYALTLIGITHDGRWVLADAVNDATSAALIVPADGPQIVLLPAGRGRALAIDGSAAAPRELAFDVIFPVLHGPNGEDGTVQGALELADVAYVGGRVLGSAAAMDKDVAKRLLRDAGLPIVPFVTMTAASPVSYDDAARAVGSSELFVKPANLGSSVGISKTRDAAEFEAACQLALRFDRKILIERCIAPVREIECAVLEHADGQIKASELGEIVPANSHGFYSYEAKYTDANGAALHVPAQVEPAVAQRIRKMATEVFGALCCESLARVDFFVRGDEIYVNEVNTLPGFTNISMYPKMWEAAGLPQPALMDELVAHALARHARLRELASQR.

Residues 145–351 (KRLLRDAGLP…QPALMDELVA (207 aa)) form the ATP-grasp domain. An ATP-binding site is contributed by 174-229 (RAVGSSELFVKPANLGSSVGISKTRDAAEFEAACQLALRFDRKILIERCIAPVREI). Mg(2+) contacts are provided by aspartate 306, glutamate 318, and asparagine 320.

It belongs to the D-alanine--D-alanine ligase family. It depends on Mg(2+) as a cofactor. Mn(2+) serves as cofactor.

The protein localises to the cytoplasm. The enzyme catalyses 2 D-alanine + ATP = D-alanyl-D-alanine + ADP + phosphate + H(+). It participates in cell wall biogenesis; peptidoglycan biosynthesis. In terms of biological role, cell wall formation. The sequence is that of D-alanine--D-alanine ligase from Bradyrhizobium sp. (strain ORS 278).